The sequence spans 124 residues: Vitelline membrane protein Vm32E (124 aa).

The signal sequence occupies residues 1–19; the sequence is MKTVAFLAVVVLFAAFACA. The 40-residue stretch at 42 to 81 folds into the VM domain; sequence SVPAPPCPKNYLFSCQPNLVPAPCAQQAAPAAYGSAGAYT.

The protein belongs to the vitelline membrane family.

The protein localises to the secreted. Its function is as follows. Major early eggshell protein. In Drosophila pseudoobscura pseudoobscura (Fruit fly), this protein is Vitelline membrane protein Vm32E.